An 892-amino-acid polypeptide reads, in one-letter code: DNA mismatch repair protein MutS (892 aa).

Gly-607–Ser-614 is an ATP binding site. Residues Glu-833–Asp-855 form a disordered region. Residues Ser-845–Asp-855 show a composition bias toward basic and acidic residues.

It belongs to the DNA mismatch repair MutS family.

Its function is as follows. This protein is involved in the repair of mismatches in DNA. It is possible that it carries out the mismatch recognition step. This protein has a weak ATPase activity. The sequence is that of DNA mismatch repair protein MutS from Bacillus anthracis (strain A0248).